The following is a 570-amino-acid chain: Sulfite reductase [NADPH] hemoprotein beta-component (570 aa).

Residues Cys-434, Cys-440, Cys-479, and Cys-483 each contribute to the [4Fe-4S] cluster site. Residue Cys-483 coordinates siroheme.

Belongs to the nitrite and sulfite reductase 4Fe-4S domain family. Alpha(8)-beta(8). The alpha component is a flavoprotein, the beta component is a hemoprotein. Siroheme serves as cofactor. Requires [4Fe-4S] cluster as cofactor.

The catalysed reaction is hydrogen sulfide + 3 NADP(+) + 3 H2O = sulfite + 3 NADPH + 4 H(+). The protein operates within sulfur metabolism; hydrogen sulfide biosynthesis; hydrogen sulfide from sulfite (NADPH route): step 1/1. Its function is as follows. Component of the sulfite reductase complex that catalyzes the 6-electron reduction of sulfite to sulfide. This is one of several activities required for the biosynthesis of L-cysteine from sulfate. This Escherichia coli O7:K1 (strain IAI39 / ExPEC) protein is Sulfite reductase [NADPH] hemoprotein beta-component.